Reading from the N-terminus, the 434-residue chain is Alpha-enolase (434 aa).

A Mg(2+)-binding site is contributed by S40. H158 and E167 together coordinate substrate. Residue E210 is the Proton donor of the active site. Mg(2+) is bound by residues D245, E293, and D318. 2 residues coordinate substrate: E293 and D318. The active-site Proton acceptor is K343. Residues S370–S373 and K394 each bind substrate.

It belongs to the enolase family. As to quaternary structure, homodimer. Mg(2+) serves as cofactor.

It localises to the cytoplasm. It carries out the reaction (2R)-2-phosphoglycerate = phosphoenolpyruvate + H2O. It participates in carbohydrate degradation; glycolysis; pyruvate from D-glyceraldehyde 3-phosphate: step 4/5. This Xenopus laevis (African clawed frog) protein is Alpha-enolase (eno1).